We begin with the raw amino-acid sequence, 397 residues long: uncharacterized protein (397 aa).

This sequence belongs to the ROK (NagC/XylR) family.

This is an uncharacterized protein from Escherichia coli (strain K12).